The following is a 334-amino-acid chain: Biotin synthase (334 aa).

Residues 55-280 enclose the Radical SAM core domain; sequence EEIEVEGIIS…HTMLRFAGGR (226 aa). Positions 70, 74, and 77 each coordinate [4Fe-4S] cluster. The [2Fe-2S] cluster site is built by Cys113, Cys205, and Arg275.

It belongs to the radical SAM superfamily. Biotin synthase family. In terms of assembly, homodimer. The cofactor is [4Fe-4S] cluster. It depends on [2Fe-2S] cluster as a cofactor.

The enzyme catalyses (4R,5S)-dethiobiotin + (sulfur carrier)-SH + 2 reduced [2Fe-2S]-[ferredoxin] + 2 S-adenosyl-L-methionine = (sulfur carrier)-H + biotin + 2 5'-deoxyadenosine + 2 L-methionine + 2 oxidized [2Fe-2S]-[ferredoxin]. It participates in cofactor biosynthesis; biotin biosynthesis; biotin from 7,8-diaminononanoate: step 2/2. In terms of biological role, catalyzes the conversion of dethiobiotin (DTB) to biotin by the insertion of a sulfur atom into dethiobiotin via a radical-based mechanism. In Corynebacterium glutamicum (strain ATCC 13032 / DSM 20300 / JCM 1318 / BCRC 11384 / CCUG 27702 / LMG 3730 / NBRC 12168 / NCIMB 10025 / NRRL B-2784 / 534), this protein is Biotin synthase.